The chain runs to 131 residues: Large ribosomal subunit protein bL12c (131 aa).

The tract at residues 107 to 131 (QGVSKDDAEASKKQLEDAGAKVKIS) is disordered. A compositionally biased stretch (basic and acidic residues) spans 110-131 (SKDDAEASKKQLEDAGAKVKIS).

Belongs to the bacterial ribosomal protein bL12 family. As to quaternary structure, homodimer. Part of the ribosomal stalk of the 50S ribosomal subunit. Forms a multimeric L10(L12)X complex, where L10 forms an elongated spine to which 2 to 4 L12 dimers bind in a sequential fashion. Binds GTP-bound translation factors.

The protein localises to the plastid. Its subcellular location is the chloroplast. Functionally, forms part of the ribosomal stalk which helps the ribosome interact with GTP-bound translation factors. Is thus essential for accurate translation. This is Large ribosomal subunit protein bL12c from Chlorella vulgaris (Green alga).